The following is a 190-amino-acid chain: Dynein axonemal light chain 1 (190 aa).

An N-acetylalanine modification is found at A2. LRR repeat units follow at residues 49 to 70 (NCEK…NGLK), 71 to 92 (NLRI…EAVG), 94 to 115 (TLEE…HVMK), and 116 to 137 (KLKI…VKLA). S56 is modified (phosphoserine). In terms of domain architecture, LRRCT spans 150 to 190 (NPLEEKHSAEGNWVEEATKRVPKLKKLDGTPVIKEDEEEDN).

This sequence belongs to the dynein light chain LC1-type family. Interacts with ZMYND10 (via C-terminus). Interacts with DNAH5, a outer arm dynein heavy chain. Interacts with tubulin located within the A-tubule of the outer doublets in a ATP-independent manner.

The protein resides in the cytoplasm. Its subcellular location is the cytoskeleton. It is found in the cilium axoneme. Part of the multisubunit axonemal ATPase complexes that generate the force for cilia motility and govern beat frequency. Component of the outer arm dynein (ODA). May be involved in a mechanosensory feedback mechanism controlling ODA activity based on external conformational cues by tethering the outer arm dynein heavy chain (DNAH5) to the microtubule within the axoneme. Important for ciliary function in the airways and for the function of the cilia that produce the nodal flow essential for the determination of the left-right asymmetry. The polypeptide is Dynein axonemal light chain 1 (DNAL1) (Bos taurus (Bovine)).